Consider the following 356-residue polypeptide: Altered inheritance of mitochondria protein 23, mitochondrial (356 aa).

Residues 1–32 constitute a mitochondrion transit peptide; the sequence is MLKVPLSDVLSQKMLFLKSFRYFHCTKYFSRD.

The protein belongs to the AIM23 family.

The protein resides in the mitochondrion. In Saccharomyces cerevisiae (strain YJM789) (Baker's yeast), this protein is Altered inheritance of mitochondria protein 23, mitochondrial (AIM23).